The sequence spans 342 residues: Isopentenyl-diphosphate delta-isomerase (342 aa).

12–13 serves as a coordination point for substrate; sequence RK. Residues 71–73, Ser-101, and Asn-129 each bind FMN; that span reads AMT. Residue 101–103 coordinates substrate; that stretch reads SQR. Gln-163 provides a ligand contact to substrate. Glu-164 lines the Mg(2+) pocket. FMN-binding positions include Lys-195, Thr-225, 272–274, and 293–294; these read GIR and AR.

It belongs to the IPP isomerase type 2 family. In terms of assembly, homooctamer. Dimer of tetramers. It depends on FMN as a cofactor. Requires NADPH as cofactor. Mg(2+) is required as a cofactor.

Its subcellular location is the cytoplasm. The enzyme catalyses isopentenyl diphosphate = dimethylallyl diphosphate. Functionally, involved in the biosynthesis of isoprenoids. Catalyzes the 1,3-allylic rearrangement of the homoallylic substrate isopentenyl (IPP) to its allylic isomer, dimethylallyl diphosphate (DMAPP). This is Isopentenyl-diphosphate delta-isomerase from Mycolicibacterium gilvum (strain PYR-GCK) (Mycobacterium gilvum (strain PYR-GCK)).